The following is a 247-amino-acid chain: MRLTQYLASKLKNFSNLPKEYIERSKKQVYWQTPKEINYLPRTVERKRFRYTTNRSWTGQFRQQNMPGTVRRKVLVEPIEDWSFFRGDRIEVLVGKDKGKQGIVTQVIPERNWVIVEGLNWHYRKVGGEKEFPGIIIKSEAPLHVTKDIRLVDPSDLQGTDFEWRFTEEGEKVRVSLRSGRIIPIPETNNQTHDYKTPNAYIEREKDTPGAVVGEITFQPKLSTFEMDIMEEMGIKEERTPVKSYWY.

In terms of domain architecture, KOW spans 84–117 (FFRGDRIEVLVGKDKGKQGIVTQVIPERNWVIVE).

It belongs to the universal ribosomal protein uL24 family. In terms of assembly, component of the mitochondrial ribosome large subunit (39S) which comprises a 16S rRNA and about 50 distinct proteins.

It is found in the mitochondrion. The protein is Large ribosomal subunit protein uL24m (mRpL24) of Drosophila melanogaster (Fruit fly).